Reading from the N-terminus, the 278-residue chain is Probable cytochrome c oxidase subunit 3 (278 aa).

6 helical membrane-spanning segments follow: residues 21–41 (PWPI…ISSM), 46–66 (FNMY…YSWW), 89–109 (IGMV…FASF), 174–194 (CVTA…MQVY), 212–232 (FYLA…FLIV), and 256–276 (AWYW…VYIL).

It belongs to the cytochrome c oxidase subunit 3 family.

The protein resides in the cell membrane. It carries out the reaction 4 Fe(II)-[cytochrome c] + O2 + 8 H(+)(in) = 4 Fe(III)-[cytochrome c] + 2 H2O + 4 H(+)(out). The polypeptide is Probable cytochrome c oxidase subunit 3 (ctaE) (Rickettsia prowazekii (strain Madrid E)).